Reading from the N-terminus, the 226-residue chain is Putative N-acetylmannosamine-6-phosphate 2-epimerase (226 aa).

Belongs to the NanE family.

The catalysed reaction is an N-acyl-D-glucosamine 6-phosphate = an N-acyl-D-mannosamine 6-phosphate. Its pathway is amino-sugar metabolism; N-acetylneuraminate degradation; D-fructose 6-phosphate from N-acetylneuraminate: step 3/5. Converts N-acetylmannosamine-6-phosphate (ManNAc-6-P) to N-acetylglucosamine-6-phosphate (GlcNAc-6-P). The sequence is that of Putative N-acetylmannosamine-6-phosphate 2-epimerase from Mycoplasma capricolum subsp. capricolum (strain California kid / ATCC 27343 / NCTC 10154).